We begin with the raw amino-acid sequence, 1314 residues long: AT-rich interactive domain-containing protein 4B (1314 aa).

Disordered stretches follow at residues 123–169 (LPLT…RKQT) and 266–306 (KTEL…EPFP). Phosphoserine occurs at positions 276, 295, and 296. Residues 277–305 (EAEEEEEEEDDEKEKEDNSSEEEEEIEPF) show a composition bias toward acidic residues. One can recognise an ARID domain in the interval 306–398 (PEERENFLQQ…YLYGFEEYCR (93 aa)). Glycyl lysine isopeptide (Lys-Gly) (interchain with G-Cter in SUMO2) cross-links involve residues Lys428 and Lys461. Residues 439–464 (NVEDSKNVMPKEETPAEDESERKENI) are compositionally biased toward basic and acidic residues. 5 disordered regions span residues 439-577 (NVED…KVQV), 635-678 (IKHR…SPEM), 709-888 (ASES…EEKR), 943-1215 (KELF…RLPK), and 1256-1290 (VASI…SITA). The residue at position 482 (Ser482) is a Phosphoserine. Residues 486-511 (KEAHITKLEENENLEDKDGGRARTEE) show a composition bias toward basic and acidic residues. Positions 531 to 567 (NKEEDEDDEEIEEEEEEDEEEDEDEDDDDNNEEEEFE) are enriched in acidic residues. The region spanning 572–624 (GMKVQVRYGRGKNQKMYEASIKDSDVEGGEALYLVHYCGWNVRYDEWIKADKI) is the Tudor-knot domain. Residues 643–656 (NKLDKEKDRDEKYS) are compositionally biased toward basic and acidic residues. Residues Ser666, Ser668, Ser675, and Ser717 each carry the phosphoserine modification. 2 stretches are compositionally biased toward basic and acidic residues: residues 722 to 754 (ERCT…KEEQ) and 778 to 787 (SPERLRKDME). Lys751 participates in a covalent cross-link: Glycyl lysine isopeptide (Lys-Gly) (interchain with G-Cter in SUMO2). Phosphoserine is present on residues Ser778 and Ser790. The segment covering 788–800 (AISEDTDFEEEDE) has biased composition (acidic residues). Thr793 bears the Phosphothreonine mark. Basic and acidic residues-rich tracts occupy residues 808–817 (VKKDTTDKAL), 841–853 (GKKE…KEPL), and 997–1012 (KPIE…RKTE). A compositionally biased stretch (polar residues) spans 1013 to 1023 (FPSSGSNSVLN). A Phosphoserine modification is found at Ser1016. Thr1028 is modified (phosphothreonine). Low complexity predominate over residues 1030 to 1051 (ESPSSVTITEASQQQSSVTVSV). Position 1031 is a phosphoserine (Ser1031). Basic and acidic residues predominate over residues 1058-1067 (EEVRSIKSET). Low complexity predominate over residues 1089 to 1103 (SSPAGFDASVSSSSS). Positions 1132–1150 (KKQKRSHKATVVNNKKKGK) are enriched in basic residues. Thr1152 bears the Phosphothreonine mark. Phosphoserine is present on residues Ser1154, Ser1155, Ser1157, and Ser1161. Over residues 1164-1186 (ESVTKTQTIKSVPTGMKTHNSKS) the composition is skewed to polar residues. A compositionally biased stretch (basic and acidic residues) spans 1198–1210 (RNGDKDPDLKEPS). Positions 1227 to 1272 (ENMTSAERISILQEKLQEIRKHYLSLKSEVASIDRRRKRLKKKERE) form a coiled coil. The span at 1274 to 1290 (AATSSSSSSPSSSSITA) shows a compositional bias: low complexity.

As to quaternary structure, component of a Sin3A corepressor complex consisting of SIN3A, SAP130, SUDS3/SAP45, SAP180, HDAC1 and HDAC2. Interacts with ARID4A. Interacts with AR. Expressed in Sertoli cells of the testis.

It localises to the nucleus. Acts as a transcriptional repressor. May function in the assembly and/or enzymatic activity of the Sin3A corepressor complex or in mediating interactions between the complex and other regulatory complexes. Plays a role in the regulation of epigenetic modifications at the PWS/AS imprinting center near the SNRPN promoter, where it might function as part of a complex with RB1 and ARID4A. Involved in spermatogenesis, together with ARID4A, where it functions as a transcriptional coactivator for AR (androgen receptor) and enhances expression of genes required for sperm maturation. Regulates expression of the tight junction protein CLDN3 in the testis, which is important for integrity of the blood-testis barrier. Plays a role in myeloid homeostasis where it regulates the histone methylation state of bone marrow cells and expression of various genes involved in hematopoiesis. May function as a leukemia suppressor. This Mus musculus (Mouse) protein is AT-rich interactive domain-containing protein 4B (Arid4b).